The primary structure comprises 299 residues: MTFKSGFVAILGRPNVGKSTFLNHVMGQKIAIMSDKAQTTRNKIMGIYTTDKEQIVFIDTPGIHKPKTALGDFMVESAYSTLREVDTVLFMVPADEARGKGDDMIIERLKAAKVPVILVVNKIDKVHPDQLLSQIDDFRNQMDFKEIVPISALQGNNVSRLVDILSENLGEGFQYFPSDQITDHPERFLVSEMVREKVLHLTREEIPHSVAVVVDSMKRDEETDKVHIRATIMVERDSQKGIIIGKGGAMLKKIGSMARRDIELMLGDKVFLETWVKVKKNWRDKKLDLADFGYNEREY.

The 168-residue stretch at 4–171 (KSGFVAILGR…VDILSENLGE (168 aa)) folds into the Era-type G domain. Positions 12–19 (GRPNVGKS) are G1. 12–19 (GRPNVGKS) lines the GTP pocket. Residues 38–42 (QTTRN) are G2. A G3 region spans residues 59–62 (DTPG). GTP contacts are provided by residues 59-63 (DTPGI) and 121-124 (NKID). The tract at residues 121 to 124 (NKID) is G4. The G5 stretch occupies residues 150–152 (ISA). The region spanning 202–280 (TREEIPHSVA…FLETWVKVKK (79 aa)) is the KH type-2 domain.

The protein belongs to the TRAFAC class TrmE-Era-EngA-EngB-Septin-like GTPase superfamily. Era GTPase family. As to quaternary structure, monomer.

Its subcellular location is the cytoplasm. The protein resides in the cell membrane. Functionally, an essential GTPase that binds both GDP and GTP, with rapid nucleotide exchange. Plays a role in 16S rRNA processing and 30S ribosomal subunit biogenesis and possibly also in cell cycle regulation and energy metabolism. The polypeptide is GTPase Era (Streptococcus pneumoniae (strain JJA)).